The primary structure comprises 353 residues: tRNA-cytidine(32) 2-sulfurtransferase (353 aa).

The short motif at 49–54 is the PP-loop motif element; that stretch reads SGGKDS. Positions 124, 127, and 215 each coordinate [4Fe-4S] cluster.

It belongs to the TtcA family. As to quaternary structure, homodimer. Mg(2+) serves as cofactor. It depends on [4Fe-4S] cluster as a cofactor.

The protein resides in the cytoplasm. It carries out the reaction cytidine(32) in tRNA + S-sulfanyl-L-cysteinyl-[cysteine desulfurase] + AH2 + ATP = 2-thiocytidine(32) in tRNA + L-cysteinyl-[cysteine desulfurase] + A + AMP + diphosphate + H(+). It functions in the pathway tRNA modification. Functionally, catalyzes the ATP-dependent 2-thiolation of cytidine in position 32 of tRNA, to form 2-thiocytidine (s(2)C32). The sulfur atoms are provided by the cysteine/cysteine desulfurase (IscS) system. The sequence is that of tRNA-cytidine(32) 2-sulfurtransferase from Sodalis glossinidius (strain morsitans).